A 50-amino-acid chain; its full sequence is Large ribosomal subunit protein eL39 (50 aa).

Belongs to the eukaryotic ribosomal protein eL39 family.

In Methanoculleus marisnigri (strain ATCC 35101 / DSM 1498 / JR1), this protein is Large ribosomal subunit protein eL39.